A 478-amino-acid polypeptide reads, in one-letter code: ATP synthase subunit beta (478 aa).

ATP is bound at residue 160 to 167 (GGAGVGKT).

This sequence belongs to the ATPase alpha/beta chains family. In terms of assembly, F-type ATPases have 2 components, CF(1) - the catalytic core - and CF(0) - the membrane proton channel. CF(1) has five subunits: alpha(3), beta(3), gamma(1), delta(1), epsilon(1). CF(0) has three main subunits: a(1), b(2) and c(9-12). The alpha and beta chains form an alternating ring which encloses part of the gamma chain. CF(1) is attached to CF(0) by a central stalk formed by the gamma and epsilon chains, while a peripheral stalk is formed by the delta and b chains.

The protein resides in the cell inner membrane. The catalysed reaction is ATP + H2O + 4 H(+)(in) = ADP + phosphate + 5 H(+)(out). Functionally, produces ATP from ADP in the presence of a proton gradient across the membrane. The catalytic sites are hosted primarily by the beta subunits. The sequence is that of ATP synthase subunit beta from Orientia tsutsugamushi (strain Ikeda) (Rickettsia tsutsugamushi).